The primary structure comprises 268 residues: Small ribosomal subunit protein eS1 (268 aa).

The segment at 1–21 is disordered; it reads MAVGKNKGLSKGGKKGGKKKV.

This sequence belongs to the eukaryotic ribosomal protein eS1 family. Component of the small ribosomal subunit. Mature ribosomes consist of a small (40S) and a large (60S) subunit. The 40S subunit contains about 33 different proteins and 1 molecule of RNA (18S). The 60S subunit contains about 49 different proteins and 3 molecules of RNA (28S, 5.8S and 5S).

The protein localises to the cytoplasm. In terms of biological role, essential for oogenesis; required for late follicle cell development. The sequence is that of Small ribosomal subunit protein eS1 from Drosophila willistoni (Fruit fly).